Reading from the N-terminus, the 323-residue chain is Quinolinate synthase (323 aa).

The iminosuccinate site is built by histidine 37 and serine 54. Residue cysteine 99 participates in [4Fe-4S] cluster binding. Iminosuccinate contacts are provided by residues 125-127 and serine 142; that span reads YIN. Cysteine 185 is a [4Fe-4S] cluster binding site. Residues 211–213 and threonine 228 each bind iminosuccinate; that span reads HPE. [4Fe-4S] cluster is bound at residue cysteine 278.

Belongs to the quinolinate synthase family. Type 2 subfamily. It depends on [4Fe-4S] cluster as a cofactor.

The protein resides in the cytoplasm. It catalyses the reaction iminosuccinate + dihydroxyacetone phosphate = quinolinate + phosphate + 2 H2O + H(+). It participates in cofactor biosynthesis; NAD(+) biosynthesis; quinolinate from iminoaspartate: step 1/1. Catalyzes the condensation of iminoaspartate with dihydroxyacetone phosphate to form quinolinate. The sequence is that of Quinolinate synthase from Trichodesmium erythraeum (strain IMS101).